The chain runs to 919 residues: Glutamate receptor ionotropic, kainate 3 (919 aa).

Residues 1 to 31 (MTAPWRRLRSLVWEYWAGFLVCAFWIPDSRG) form the signal peptide. At 32-563 (MPHVIRIGGI…VFSFLNPLSP (532 aa)) the chain is on the extracellular side. N-linked (GlcNAc...) asparagine glycans are attached at residues N70, N76, N278, N381, N415, N426, and N433. C99 and C350 are disulfide-bonded. The L-glutamate site is built by P518, T520, and R525. N-linked (GlcNAc...) asparagine glycans are attached at residues N548 and N551. The helical transmembrane segment at 564–584 (DIWMYVLLAYLGVSCVLFVIA) threads the bilayer. The Cytoplasmic segment spans residues 585–636 (RFSPYEWYDAHPCNPGSEVVENNFTLLNSFWFGMGSLMQQGSELMPKALSTR). A helical transmembrane segment spans residues 637–657 (IIGGIWWFFTLIIISSYTANL). Topologically, residues 658–820 (AAFLTVERME…KEASALGIQK (163 aa)) are extracellular. Positions 691, 692, and 739 each coordinate L-glutamate. N752 is a glycosylation site (N-linked (GlcNAc...) asparagine). Residues 821 to 841 (IGGIFIVLAAGLVLSVLVAVG) traverse the membrane as a helical segment. Topologically, residues 842–919 (EFIYKLRKTA…CSTSLAPVFP (78 aa)) are cytoplasmic. S869 carries the phosphoserine modification. K887 participates in a covalent cross-link: Glycyl lysine isopeptide (Lys-Gly) (interchain with G-Cter in SUMO1).

Belongs to the glutamate-gated ion channel (TC 1.A.10.1) family. GRIK3 subfamily. Homotetramer, and heterotetramer with GRIK4 or GRIK5. Can form functional heteromeric receptors with GRIK2. Interacts with PRKCABP. Interacts with NETO2. In terms of assembly, homomeric GluR7A forms functional kainate receptors which have very low sensitivity to glutamate. Can form functional heteromeric receptors with GRIK4 and GRIK5. As to quaternary structure, homomeric GluR7B forms functional kainate receptors. In terms of processing, mass spectrometry data suggest the protein is N-glycosylated at five distinct sites. In terms of tissue distribution, expressed in the olfactory bulb (at protein level). Expressed in the deep cortical layers, dentate gyrus, reticular thalamic nucleus, mammillary bodies, pons, and cerebellum of the adult.

It localises to the cell membrane. It is found in the postsynaptic cell membrane. It catalyses the reaction Ca(2+)(in) = Ca(2+)(out). In terms of biological role, ionotropic glutamate receptor that functions as a cation-permeable ligand-gated ion channel, gated by L-glutamate and the glutamatergic agonist kainic acid. Binding of the excitatory neurotransmitter L-glutamate induces a conformation change, leading to the opening of the cation channel, and thereby converts the chemical signal to an electrical impulse. The receptor then desensitizes rapidly and enters a transient inactive state, characterized by the presence of bound agonist. In association with GRIK2, involved in presynaptic facilitation of glutamate release at hippocampal mossy fiber synapses. Its function is as follows. Ionotropic glutamate receptor that functions as a ligand-gated cation channel, gated by L-glutamate and the glutamatergic agonist kainic acid. In Rattus norvegicus (Rat), this protein is Glutamate receptor ionotropic, kainate 3 (Grik3).